The sequence spans 1157 residues: ATP-dependent helicase/deoxyribonuclease subunit B (1157 aa).

Residues 1–299 enclose the UvrD-like helicase ATP-binding domain; sequence MSIRFIIGRA…SHLEKYFFVR (299 aa). 8-15 is a binding site for ATP; sequence GRAGAGKT. A UvrD-like helicase C-terminal domain is found at 279–590; that stretch reads GNTARFKSPA…LVASLERSRN (312 aa). 4 residues coordinate [4Fe-4S] cluster: cysteine 792, cysteine 1112, cysteine 1115, and cysteine 1121.

This sequence belongs to the helicase family. AddB/RexB type 1 subfamily. Heterodimer of AddA and AddB. Mg(2+) is required as a cofactor. The cofactor is [4Fe-4S] cluster.

Functionally, the heterodimer acts as both an ATP-dependent DNA helicase and an ATP-dependent, dual-direction single-stranded exonuclease. Recognizes the chi site generating a DNA molecule suitable for the initiation of homologous recombination. The AddB subunit has 5' -&gt; 3' nuclease activity but not helicase activity. The sequence is that of ATP-dependent helicase/deoxyribonuclease subunit B from Pelotomaculum thermopropionicum (strain DSM 13744 / JCM 10971 / SI).